Here is a 140-residue protein sequence, read N- to C-terminus: MGTIFHLDIVSAEESIYSGPAEFIVAPAVMGEVGIYPQHTPMLTRIKSGVVRVKAPLQDDEEIYVSGGMLEVQPDVVTILADTAVRGQDLDEAKALEAKRKAEEIMKNKTSDIEYARAQAELIEATAQLAAIRKLRKRRH.

The protein belongs to the ATPase epsilon chain family. As to quaternary structure, F-type ATPases have 2 components, CF(1) - the catalytic core - and CF(0) - the membrane proton channel. CF(1) has five subunits: alpha(3), beta(3), gamma(1), delta(1), epsilon(1). CF(0) has three main subunits: a, b and c.

It is found in the cell inner membrane. In terms of biological role, produces ATP from ADP in the presence of a proton gradient across the membrane. The sequence is that of ATP synthase epsilon chain from Nitrosomonas eutropha (strain DSM 101675 / C91 / Nm57).